Consider the following 310-residue polypeptide: Taste receptor type 2 member 125 (310 aa).

Over 1-2 the chain is Extracellular; that stretch reads MG. A helical transmembrane segment spans residues 3-23; that stretch reads IVIGIICAFIIIVQFIIGNVA. The Cytoplasmic portion of the chain corresponds to 24 to 46; it reads NGFIALVNIIDWVKRRKISLVDQ. A helical membrane pass occupies residues 47–67; sequence IITALAISRIDMLCSTFLIVL. The Extracellular segment spans residues 68-87; the sequence is ITSLYPDLNTAVNMVKISNN. The chain crosses the membrane as a helical span at residues 88–108; it reads IWIVANHFSIWLATSLSIFYF. The Cytoplasmic portion of the chain corresponds to 109–128; sequence LKIANFSNYVFLCLRWRLSK. The helical transmembrane segment at 129–149 threads the bilayer; it reads VVSVTLLLSLVLLLMNILIMN. At 150–185 the chain is on the extracellular side; that stretch reads MHIDTWSDGFKRNVSFGFRSKNCTRFFKLALLINTT. 3 N-linked (GlcNAc...) asparagine glycosylation sites follow: Asn162, Asn171, and Asn183. A helical membrane pass occupies residues 186-206; that stretch reads FTCVPFTVSMVAFLLLIFSLW. Residues 207-232 lie on the Cytoplasmic side of the membrane; sequence RHLKNMQYHAKGSRDPSTAVHIKALQ. Residues 233–253 form a helical membrane-spanning segment; the sequence is MVVVFVLFYTFFFLSLAIQLW. Residues 254–261 are Extracellular-facing; that stretch reads TSESLEKN. A helical membrane pass occupies residues 262–282; sequence NLFYVTLIITFPSVHSCMLIL. At 283 to 310 the chain is on the cytoplasmic side; the sequence is RNSKLRQASLLVLWWLLCRSKDIQTLVP.

This sequence belongs to the G-protein coupled receptor T2R family.

Its subcellular location is the membrane. Putative taste receptor which may play a role in the perception of bitterness. This Rattus norvegicus (Rat) protein is Taste receptor type 2 member 125.